Here is a 559-residue protein sequence, read N- to C-terminus: Urocanate hydratase (559 aa).

Residues 50-51, glutamine 128, 174-176, aspartate 194, arginine 199, 240-241, 261-265, 271-272, and tyrosine 320 each bind NAD(+); these read GG, GMG, NA, QTSAH, and YI. Cysteine 408 is a catalytic residue. NAD(+) is bound at residue glycine 490.

This sequence belongs to the urocanase family. NAD(+) serves as cofactor.

It is found in the cytoplasm. The enzyme catalyses 4-imidazolone-5-propanoate = trans-urocanate + H2O. It functions in the pathway amino-acid degradation; L-histidine degradation into L-glutamate; N-formimidoyl-L-glutamate from L-histidine: step 2/3. Its function is as follows. Catalyzes the conversion of urocanate to 4-imidazolone-5-propionate. The polypeptide is Urocanate hydratase (Halalkalibacterium halodurans (strain ATCC BAA-125 / DSM 18197 / FERM 7344 / JCM 9153 / C-125) (Bacillus halodurans)).